Reading from the N-terminus, the 216-residue chain is Adenylate kinase (216 aa).

10 to 15 lines the ATP pocket; sequence GAGKGT. Positions 30–59 are NMP; sequence STGDMLRAAVAAGTEVGKRAKAVMDAGKLV. AMP contacts are provided by residues threonine 31, arginine 36, 57–59, 85–88, and glutamine 92; these read KLV and GFPR. Residues 126–163 are LID; sequence GRYTCANCGAGYHDENLRPKVEGVCDRCGSTHFKRRAD. ATP is bound at residue arginine 127. Residues cysteine 130, cysteine 133, cysteine 150, and cysteine 153 each coordinate Zn(2+). 2 residues coordinate AMP: arginine 160 and arginine 172. Position 200 (alanine 200) interacts with ATP.

This sequence belongs to the adenylate kinase family. Monomer.

The protein resides in the cytoplasm. It catalyses the reaction AMP + ATP = 2 ADP. It functions in the pathway purine metabolism; AMP biosynthesis via salvage pathway; AMP from ADP: step 1/1. Catalyzes the reversible transfer of the terminal phosphate group between ATP and AMP. Plays an important role in cellular energy homeostasis and in adenine nucleotide metabolism. This chain is Adenylate kinase, found in Rhizobium rhizogenes (strain K84 / ATCC BAA-868) (Agrobacterium radiobacter).